The chain runs to 402 residues: N-acetyltransferase Eis (402 aa).

One can recognise an N-acetyltransferase domain in the interval 3 to 154 (VTLCSPTEDD…RFARFHADAP (152 aa)). Acetyl-CoA contacts are provided by residues 85–87 (VAV), 93–98 (RRGLLR), and 121–122 (SE). Tyrosine 126 acts as the Proton donor in catalysis. Phenylalanine 402 acts as the Proton acceptor; via carboxylate in catalysis.

It belongs to the acetyltransferase Eis family. Homohexamer; trimer of dimers.

It localises to the secreted. The protein resides in the host cytoplasmic vesicle. The protein localises to the host phagosome. It is found in the extracellular vesicle. Its subcellular location is the bacterial extracellular vesicle. It localises to the host extracellular space. The catalysed reaction is L-lysyl-[protein] + acetyl-CoA = N(6)-acetyl-L-lysyl-[protein] + CoA + H(+). Effector that is released into the host cell and affects host immune responses. Acts as an acetyltransferase that acetylates lysine residues of host proteins. The chain is N-acetyltransferase Eis from Mycobacterium bovis (strain ATCC BAA-935 / AF2122/97).